Consider the following 8892-residue polypeptide: Nonribosomal peptide synthetase 32 (8892 aa).

The region spanning 12-85 (EPSKLVLGRV…QLAESIAQQN (74 aa)) is the Carrier 1 domain. Ser-46 is subject to O-(pantetheine 4'-phosphoryl)serine. Residues 88–112 (AGNGVNGHANGNGMNGNGLHNEATI) are disordered. Positions 93-108 (NGHANGNGMNGNGLHN) are enriched in low complexity. The interval 567-956 (PTSANVPRRV…EGVDLSVRDF (390 aa)) is condensation 1. Positions 989-1386 (KMAEQPEALA…GRIDSQIKIR (398 aa)) are adenylation 1. One can recognise a Carrier 2 domain in the interval 1523 to 1599 (ISATAVEREL…ELAAEVQATQ (77 aa)). The residue at position 1560 (Ser-1560) is an O-(pantetheine 4'-phosphoryl)serine. The segment at 1609–2039 (GAIALSPIQQ…YGQTVKSLVN (431 aa)) is epimerization 1. The tract at residues 2083 to 2518 (EDILPCSPIQ…LLLPAEEAKL (436 aa)) is condensation 2. Positions 2543-2934 (SQPEALAVSA…GRRDTQVKIR (392 aa)) are adenylation 2. The region spanning 3061-3137 (SSATPIEREL…ELAANSQTGR (77 aa)) is the Carrier 3 domain. Ser-3098 is modified (O-(pantetheine 4'-phosphoryl)serine). The segment at 3153 to 3590 (LSPIQQMFFD…GDTVKTLVEE (438 aa)) is epimerization 2. The tract at residues 3634–4061 (EDILPCSAIQ…NVDRPLRELT (428 aa)) is condensation 3. The adenylation 3 stretch occupies residues 4098 to 4488 (TLPEALAISS…GRIDSQIKIR (391 aa)). The Carrier 4 domain occupies 4627-4703 (APTTDLERKL…DLSRVVEEKC (77 aa)). Ser-4664 carries the O-(pantetheine 4'-phosphoryl)serine modification. The interval 4760-5181 (EDVYPCSPMQ…LLTDEDCDQL (422 aa)) is condensation 4. An adenylation 4 region spans residues 5205-5605 (TSYPTAPAIS…GRRDTQVKIR (401 aa)). In terms of domain architecture, Carrier 5 spans 5745–5821 (MPTTPMEQKL…DLAEAMEEKG (77 aa)). Ser-5782 bears the O-(pantetheine 4'-phosphoryl)serine mark. The condensation 5 stretch occupies residues 5868-6285 (EDVYPCSPLQ…LLSPGQMAQI (418 aa)). The tract at residues 6307–6700 (QMTTRPAATA…GRIDTQIKIR (394 aa)) is adenylation 5. Residues 6834-6911 (ELTTTIERQL…ELATQTQTTE (78 aa)) form the Carrier 6 domain. The residue at position 6872 (Ser-6872) is an O-(pantetheine 4'-phosphoryl)serine. The interval 6923-7360 (NFQLSPIQQM…SYSCAIESLV (438 aa)) is epimerization 3. The segment at 7403–7834 (VQDILPCSPI…LLPAGDANQI (432 aa)) is condensation 6. Residues 7855–8253 (QQMAAHPTAQ…LDRIGTQVKI (399 aa)) are adenylation 6. A Carrier 7 domain is found at 8380-8456 (APVGRNEEIL…AMAARVTADI (77 aa)). Residue Ser-8417 is modified to O-(pantetheine 4'-phosphoryl)serine. The segment at 8490–8878 (HFAFDATGPC…EIIEDSGCNV (389 aa)) is condensation 7.

The protein belongs to the NRP synthetase family.

Its pathway is secondary metabolite biosynthesis. Its function is as follows. Nonribosomal peptide synthetase; part of the gene cluster that mediates the biosynthesis of the lipopeptides W493 A and B. W493 A and B consist of six amino acid residues D-allo-thr, L-Ala, D-Ala, L-Gln, D-Tyr, and L-Val/L-Ile linked to a 3-hydroxy-4-methyltetradecanoic acid polyketide chain. The biosynthesis starts with formation of the linear polyketide chain by the highly reducing polyketide synthase PKS40. The gene cluster contains a putative acyl-CoA ligase (FPSE_09184) for formation of a CoA thioester polyketide. The thiol bond could be hydrolyzed by the putative thioesterase (FPSE_09186) and then accepted by the first T domain in module 1 of NRPS32. The second T domain is responsible for accepting a threonine, which is adenylated by the A domain and epimerized to the D-allo-threonine formed by the E domain. The five successive modules incorporate Ala, Ala, Gln, Tyr, and Val/Ile into the final product, which is released by cyclization. The polypeptide is Nonribosomal peptide synthetase 32 (Fusarium pseudograminearum (strain CS3096) (Wheat and barley crown-rot fungus)).